The chain runs to 117 residues: Immunoglobulin heavy variable 5-10-1 (117 aa).

The first 19 residues, 1 to 19 (MGSTAILALLLAVLQGVCA), serve as a signal peptide directing secretion. The interval 20 to 44 (EVQLVQSGAEVKKPGESLRISCKGS) is framework-1. Residues 20 to 117 (EVQLVQSGAE…SDTAMYYCAR (98 aa)) enclose the Ig-like domain. A disulfide bond links cysteine 41 and cysteine 115. The interval 45–52 (GYSFTSYW) is complementarity-determining-1. The tract at residues 53–69 (ISWVRQMPGKGLEWMGR) is framework-2. A complementarity-determining-2 region spans residues 70–77 (IDPSDSYT). Residues 78 to 115 (NYSPSFQGHVTISADKSISTAYLQWSSLKASDTAMYYC) form a framework-3 region. A complementarity-determining-3 region spans residues 116-117 (AR).

Immunoglobulins are composed of two identical heavy chains and two identical light chains; disulfide-linked.

The protein localises to the secreted. It is found in the cell membrane. V region of the variable domain of immunoglobulin heavy chains that participates in the antigen recognition. Immunoglobulins, also known as antibodies, are membrane-bound or secreted glycoproteins produced by B lymphocytes. In the recognition phase of humoral immunity, the membrane-bound immunoglobulins serve as receptors which, upon binding of a specific antigen, trigger the clonal expansion and differentiation of B lymphocytes into immunoglobulins-secreting plasma cells. Secreted immunoglobulins mediate the effector phase of humoral immunity, which results in the elimination of bound antigens. The antigen binding site is formed by the variable domain of one heavy chain, together with that of its associated light chain. Thus, each immunoglobulin has two antigen binding sites with remarkable affinity for a particular antigen. The variable domains are assembled by a process called V-(D)-J rearrangement and can then be subjected to somatic hypermutations which, after exposure to antigen and selection, allow affinity maturation for a particular antigen. The chain is Immunoglobulin heavy variable 5-10-1 from Homo sapiens (Human).